We begin with the raw amino-acid sequence, 120 residues long: Putative cysteine proteinase inhibitor 11 (120 aa).

An N-terminal signal peptide occupies residues 1-24 (MARHPGLLLILLAAVAAVATTSRA). Residues 73-77 (QVVQG) carry the Secondary area of contact motif.

It belongs to the cystatin family. Phytocystatin subfamily.

Its subcellular location is the secreted. In terms of biological role, specific inhibitor of cysteine proteinases. Probably involved in the regulation of endogenous processes and in defense against pests and pathogens. The polypeptide is Putative cysteine proteinase inhibitor 11 (Oryza sativa subsp. japonica (Rice)).